A 448-amino-acid chain; its full sequence is MSQSTATYINVIGAGLAGSEAAYQIAKRGIPVKLYEMRGVKATPQHKTTNFAELVCSNSFRGDSLTNAVGLLKEEMRRLDSIIMRNGEANRVPAGGAMAVDREGYAKSVTAELENHPLIEVIRDEITEIPDDAITVIATGPLTSDALAEKIHALNGGDGFYFYDAAAPIIDKSTIDMSKVYLKSRYDKGEAAYLNCPMTKEEFMAFHDALTNAEEAPLNAFEKEKYFEGCMPIEVMAKRGIKTMLYGPMKPVGLEYPDDYTGPRDGEFKTPYAVVQLRQDNAAGSLYNIVGFQTHLKWGEQKRVFQMIPGLENAEFVRYGVMHRNSYMDSPNLLTETFQSRNNPNLFFAGQMTGVEGYVESAASGLVAGTNAARLFKREEALVFPQTTAIGSLPHYVTHADSKHFQPMNVNFGIIKELEGPRIRDKKERYEAIASRALADLDTCLASL.

Position 13-18 (13-18 (GAGLAG)) interacts with FAD.

Belongs to the MnmG family. TrmFO subfamily. FAD is required as a cofactor.

The protein localises to the cytoplasm. The catalysed reaction is uridine(54) in tRNA + (6R)-5,10-methylene-5,6,7,8-tetrahydrofolate + NADH + H(+) = 5-methyluridine(54) in tRNA + (6S)-5,6,7,8-tetrahydrofolate + NAD(+). It catalyses the reaction uridine(54) in tRNA + (6R)-5,10-methylene-5,6,7,8-tetrahydrofolate + NADPH + H(+) = 5-methyluridine(54) in tRNA + (6S)-5,6,7,8-tetrahydrofolate + NADP(+). In terms of biological role, catalyzes the folate-dependent formation of 5-methyl-uridine at position 54 (M-5-U54) in all tRNAs. The chain is Methylenetetrahydrofolate--tRNA-(uracil-5-)-methyltransferase TrmFO from Streptococcus pyogenes serotype M28 (strain MGAS6180).